The primary structure comprises 670 residues: tRNA 5-methylaminomethyl-2-thiouridine biosynthesis bifunctional protein MnmC (670 aa).

Residues 1-242 (MTFSVQHAEI…KRECLSGLKI (242 aa)) are tRNA (mnm(5)s(2)U34)-methyltransferase. Residues 269 to 670 (IGGGIASLCA…KKWLKGSKVE (402 aa)) are FAD-dependent cmnm(5)s(2)U34 oxidoreductase.

The protein in the N-terminal section; belongs to the methyltransferase superfamily. tRNA (mnm(5)s(2)U34)-methyltransferase family. It in the C-terminal section; belongs to the DAO family. The cofactor is FAD.

It localises to the cytoplasm. It carries out the reaction 5-aminomethyl-2-thiouridine(34) in tRNA + S-adenosyl-L-methionine = 5-methylaminomethyl-2-thiouridine(34) in tRNA + S-adenosyl-L-homocysteine + H(+). In terms of biological role, catalyzes the last two steps in the biosynthesis of 5-methylaminomethyl-2-thiouridine (mnm(5)s(2)U) at the wobble position (U34) in tRNA. Catalyzes the FAD-dependent demodification of cmnm(5)s(2)U34 to nm(5)s(2)U34, followed by the transfer of a methyl group from S-adenosyl-L-methionine to nm(5)s(2)U34, to form mnm(5)s(2)U34. This is tRNA 5-methylaminomethyl-2-thiouridine biosynthesis bifunctional protein MnmC from Haemophilus influenzae (strain ATCC 51907 / DSM 11121 / KW20 / Rd).